The primary structure comprises 138 residues: Nucleoside diphosphate kinase (138 aa).

6 residues coordinate ATP: K11, F59, R87, T93, R104, and N114. The active-site Pros-phosphohistidine intermediate is H117.

Belongs to the NDK family. Requires Mg(2+) as cofactor.

The protein resides in the cytoplasm. It catalyses the reaction a 2'-deoxyribonucleoside 5'-diphosphate + ATP = a 2'-deoxyribonucleoside 5'-triphosphate + ADP. The enzyme catalyses a ribonucleoside 5'-diphosphate + ATP = a ribonucleoside 5'-triphosphate + ADP. In terms of biological role, major role in the synthesis of nucleoside triphosphates other than ATP. The ATP gamma phosphate is transferred to the NDP beta phosphate via a ping-pong mechanism, using a phosphorylated active-site intermediate. The protein is Nucleoside diphosphate kinase of Saccharolobus islandicus (strain Y.N.15.51 / Yellowstone #2) (Sulfolobus islandicus).